Reading from the N-terminus, the 101-residue chain is Small ribosomal subunit protein uS14 (101 aa).

This sequence belongs to the universal ribosomal protein uS14 family. As to quaternary structure, part of the 30S ribosomal subunit. Contacts proteins S3 and S10.

In terms of biological role, binds 16S rRNA, required for the assembly of 30S particles and may also be responsible for determining the conformation of the 16S rRNA at the A site. In Protochlamydia amoebophila (strain UWE25), this protein is Small ribosomal subunit protein uS14.